The sequence spans 136 residues: Small ribosomal subunit protein uS9 (136 aa).

This sequence belongs to the universal ribosomal protein uS9 family.

In Borrelia garinii subsp. bavariensis (strain ATCC BAA-2496 / DSM 23469 / PBi) (Borreliella bavariensis), this protein is Small ribosomal subunit protein uS9.